A 197-amino-acid chain; its full sequence is MNRKTGTTTVGIKVKDGVILAADTQASLDHMVETLNIRKIIPITDRIAITTAGSVGDVQMIARILEAEARYYYFAWGRPMTTKAMANLLSNILNENKWFPYLVQIIIGGYVDEPTIANLDPYGGLIFDNYTATGSGTPFAIAILEEGYKENLGIEEAKELAIKAIKAAGSRDVYTGSKKVQVVTITKEGMQEEFIKL.

Positions 1 to 6 (MNRKTG) are cleaved as a propeptide — removed in mature form; by autocatalysis. Residue Thr-7 is the Nucleophile of the active site.

Belongs to the peptidase T1B family. As to quaternary structure, the 20S proteasome core is composed of 14 alpha and 14 beta subunits that assemble into four stacked heptameric rings, resulting in a barrel-shaped structure. The two inner rings, each composed of seven catalytic beta subunits, are sandwiched by two outer rings, each composed of seven alpha subunits. The catalytic chamber with the active sites is on the inside of the barrel. Has a gated structure, the ends of the cylinder being occluded by the N-termini of the alpha-subunits. Is capped at one or both ends by the proteasome regulatory ATPase, PAN.

The protein localises to the cytoplasm. It catalyses the reaction Cleavage of peptide bonds with very broad specificity.. With respect to regulation, the formation of the proteasomal ATPase PAN-20S proteasome complex, via the docking of the C-termini of PAN into the intersubunit pockets in the alpha-rings, triggers opening of the gate for substrate entry. Interconversion between the open-gate and close-gate conformations leads to a dynamic regulation of the 20S proteasome proteolysis activity. Its function is as follows. Component of the proteasome core, a large protease complex with broad specificity involved in protein degradation. The polypeptide is Proteasome subunit beta 1 (Pyrococcus horikoshii (strain ATCC 700860 / DSM 12428 / JCM 9974 / NBRC 100139 / OT-3)).